The primary structure comprises 110 residues: Disintegrin jerdostatin (110 aa).

The N-terminal stretch at 1–20 (MIQVLLVTICLAVFPYQVSS) is a signal peptide. The propeptide occupies 21 to 67 (KTLKSGSVNEYEVVNPGTVTGLPKGAVKQPEKKHEPMKGNTLQKLPL). Positions 27–110 (SVNEYEVVNP…CECPSYPGNG (84 aa)) constitute a Disintegrin domain. 4 cysteine pairs are disulfide-bonded: Cys68/Cys77, Cys73/Cys96, Cys74/Cys101, and Cys86/Cys103. A Cell attachment site; atypical (RTS) motif is present at residues 88 to 90 (RTS).

The protein belongs to the disintegrin family. Short disintegrin subfamily. As to quaternary structure, monomer. In terms of processing, two conformers are found, they may differ by their disulfide bond connectivities. Conformer 2 is 33 times less active than conformer 1. Conformer 2 may represent a non-native protein. The C-terminal dipeptide may be post-translationally removed, as seen in disintegrins that possess a KTS integrin-binding motif. As to expression, expressed by the venom gland.

It is found in the secreted. Recombinant protein inhibits the adhesion of alpha-1/beta-1-K562 (ITGA1/ITGB1) cells to collagen IV with an IC(50) of 80 nM. This chain is Disintegrin jerdostatin, found in Protobothrops jerdonii (Jerdon's pitviper).